The chain runs to 467 residues: Coiled-coil domain-containing protein 174 (467 aa).

Disordered stretches follow at residues 47-76 (INKK…LEEQ) and 129-163 (GATR…SEEW). A compositionally biased stretch (basic and acidic residues) spans 64–76 (RAEKDAEQKLEEQ). The stretch at 64-99 (RAEKDAEQKLEEQKTLDKAREKLEEKAKLYEKMTKG) forms a coiled coil. Acidic residues predominate over residues 136–147 (IEEERDDDDKEE). A Phosphoserine modification is found at S198. Positions 268-310 (LEMLREQTTDQRIKRENIKEKRKAMLEARLAKLRQKKMKKSKE) form a coiled coil. 2 disordered regions span residues 301-365 (RQKK…IREW) and 379-454 (KQSE…VTFQ). Composition is skewed to basic and acidic residues over residues 349–365 (IQER…IREW) and 379–390 (KQSELRAERDPE). Over residues 406 to 415 (PMSSQPQSRP) the composition is skewed to polar residues. A compositionally biased stretch (low complexity) spans 423–446 (GHSSGQSQEPSSSHTSTPASESSP).

Its subcellular location is the nucleus. Functionally, probably involved in neuronal development. This Mus musculus (Mouse) protein is Coiled-coil domain-containing protein 174 (Ccdc174).